The primary structure comprises 227 residues: 2,3-bisphosphoglycerate-dependent phosphoglycerate mutase (227 aa).

Substrate is bound by residues Arg-8 to Asn-15, Thr-21 to Gly-22, Arg-58, Glu-110 to Tyr-113, Lys-121, Arg-137 to Arg-138, and Gly-181 to Asn-182. Catalysis depends on His-9, which acts as the Tele-phosphohistidine intermediate. Residue Glu-110 is the Proton donor/acceptor of the active site.

Belongs to the phosphoglycerate mutase family. BPG-dependent PGAM subfamily.

It carries out the reaction (2R)-2-phosphoglycerate = (2R)-3-phosphoglycerate. It participates in carbohydrate degradation; glycolysis; pyruvate from D-glyceraldehyde 3-phosphate: step 3/5. Catalyzes the interconversion of 2-phosphoglycerate and 3-phosphoglycerate. This is 2,3-bisphosphoglycerate-dependent phosphoglycerate mutase from Chlamydia abortus (strain DSM 27085 / S26/3) (Chlamydophila abortus).